The primary structure comprises 556 residues: 2-succinyl-5-enolpyruvyl-6-hydroxy-3-cyclohexene-1-carboxylate synthase (556 aa).

This sequence belongs to the TPP enzyme family. MenD subfamily. Homodimer. Mg(2+) is required as a cofactor. Mn(2+) serves as cofactor. Requires thiamine diphosphate as cofactor.

It catalyses the reaction isochorismate + 2-oxoglutarate + H(+) = 5-enolpyruvoyl-6-hydroxy-2-succinyl-cyclohex-3-ene-1-carboxylate + CO2. It functions in the pathway quinol/quinone metabolism; 1,4-dihydroxy-2-naphthoate biosynthesis; 1,4-dihydroxy-2-naphthoate from chorismate: step 2/7. The protein operates within quinol/quinone metabolism; menaquinone biosynthesis. In terms of biological role, catalyzes the thiamine diphosphate-dependent decarboxylation of 2-oxoglutarate and the subsequent addition of the resulting succinic semialdehyde-thiamine pyrophosphate anion to isochorismate to yield 2-succinyl-5-enolpyruvyl-6-hydroxy-3-cyclohexene-1-carboxylate (SEPHCHC). The chain is 2-succinyl-5-enolpyruvyl-6-hydroxy-3-cyclohexene-1-carboxylate synthase from Klebsiella pneumoniae (strain 342).